We begin with the raw amino-acid sequence, 227 residues long: UPF0758 protein llmg_1515 (227 aa).

The region spanning 103–225 (QVLSSKEYGM…YYSFRERDSN (123 aa)) is the MPN domain. Zn(2+) contacts are provided by histidine 174, histidine 176, and aspartate 187. The short motif at 174–187 (HNHPSGNLQPSQAD) is the JAMM motif element.

This sequence belongs to the UPF0758 family.

This is UPF0758 protein llmg_1515 from Lactococcus lactis subsp. cremoris (strain MG1363).